The sequence spans 671 residues: Anaphase-promoting complex subunit cut9 (671 aa).

The tract at residues methionine 1–alanine 24 is disordered. TPR repeat units follow at residues arginine 83–threonine 114, proline 117–lysine 142, serine 150–leucine 173, leucine 198–valine 229, tyrosine 234–lysine 257, alanine 268–serine 296, aspartate 306–isoleucine 334, valine 341–arginine 368, alanine 373–methionine 402, glycine 407–arginine 435, leucine 442–leucine 470, proline 475–lysine 507, lysine 513–leucine 545, and alanine 550–isoleucine 579. Residues asparagine 622–valine 643 form a disordered region.

As to quaternary structure, the APC/C is composed of at least 13 subunits: apc1, apc2, nuc2, apc4, apc5, cut9, apc8, apc10, apc11, hcn1, apc13, apc14 and apc15. Homodimer. Interacts directly with nuc2 and hcn1. Phosphorylated.

The protein resides in the nucleus. Its function is as follows. Component of the anaphase-promoting complex/cyclosome (APC/C), a cell cycle-regulated E3 ubiquitin-protein ligase complex that controls progression through mitosis and the G1 phase of the cell cycle. The APC/C is thought to confer substrate specificity and, in the presence of ubiquitin-conjugating E2 enzymes, it catalyzes the formation of protein-ubiquitin conjugates that are subsequently degraded by the 26S proteasome. May play a pivotal role in the control of anaphase. This Schizosaccharomyces pombe (strain 972 / ATCC 24843) (Fission yeast) protein is Anaphase-promoting complex subunit cut9 (cut9).